Here is a 273-residue protein sequence, read N- to C-terminus: Peptide deformylase 1B, chloroplastic/mitochondrial (273 aa).

The transit peptide at 1–56 directs the protein to the chloroplast and mitochondrion; it reads MAVCNCFLQAPPLSRILLPVLSRRATTLSAGYGRLKSTVTFCSTVNRTSPLTSSVR. Residues Cys-171 and His-213 each contribute to the Fe cation site. The active site involves Glu-214. His-217 contributes to the Fe cation binding site. A compositionally biased stretch (basic and acidic residues) spans 246–261; the sequence is YEEKTGLPSPERVEAR. A disordered region spans residues 246-273; it reads YEEKTGLPSPERVEARQKRKAGVGFGKR. Basic residues predominate over residues 262 to 273; it reads QKRKAGVGFGKR.

The protein belongs to the polypeptide deformylase family. In terms of assembly, homodimer. Requires Fe(2+) as cofactor. As to expression, expressed in leaves and flowers.

The protein resides in the plastid. The protein localises to the chloroplast stroma. It is found in the mitochondrion. The catalysed reaction is N-terminal N-formyl-L-methionyl-[peptide] + H2O = N-terminal L-methionyl-[peptide] + formate. Inhibited by actinonin. Removes the formyl group from the N-terminal Met of newly synthesized proteins. Has a preferred substrate specificity towards the photosystem II (PS II) D1 polypeptide. This Arabidopsis thaliana (Mouse-ear cress) protein is Peptide deformylase 1B, chloroplastic/mitochondrial (PDF1B).